Here is a 149-residue protein sequence, read N- to C-terminus: Transthyretin (149 aa).

The N-terminal stretch at Met-1–Ala-20 is a signal peptide. Cys-32 is modified (sulfocysteine). An L-thyroxine-binding site is contributed by Lys-37. Glu-64 is subject to 4-carboxyglutamate. L-thyroxine contacts are provided by Glu-76 and Ser-139.

Belongs to the transthyretin family. In terms of assembly, homotetramer. Dimer of dimers. In the homotetramer, subunits assemble around a central channel that can accommodate two ligand molecules. Interacts with RBP4. Sulfonation of the reactive cysteine Cys-32 enhances the stability of the native conformation of TTR, avoiding misassembly of the protein leading to amyloid formation. In terms of tissue distribution, highly expressed in the choroid plexus.

It localises to the secreted. Functionally, thyroid hormone-binding protein. Probably transports thyroxine from the bloodstream to the brain. The chain is Transthyretin (TTR) from Sminthopsis macroura (Stripe-faced dunnart).